Here is a 218-residue protein sequence, read N- to C-terminus: Peptide methionine sulfoxide reductase MsrA (218 aa).

The active site involves cysteine 57.

It belongs to the MsrA Met sulfoxide reductase family.

The catalysed reaction is L-methionyl-[protein] + [thioredoxin]-disulfide + H2O = L-methionyl-(S)-S-oxide-[protein] + [thioredoxin]-dithiol. It catalyses the reaction [thioredoxin]-disulfide + L-methionine + H2O = L-methionine (S)-S-oxide + [thioredoxin]-dithiol. In terms of biological role, has an important function as a repair enzyme for proteins that have been inactivated by oxidation. Catalyzes the reversible oxidation-reduction of methionine sulfoxide in proteins to methionine. The sequence is that of Peptide methionine sulfoxide reductase MsrA from Brucella melitensis biotype 1 (strain ATCC 23456 / CCUG 17765 / NCTC 10094 / 16M).